We begin with the raw amino-acid sequence, 371 residues long: 4-hydroxy-3-methylbut-2-en-1-yl diphosphate synthase (flavodoxin) (371 aa).

Residues cysteine 270, cysteine 273, cysteine 305, and glutamate 312 each contribute to the [4Fe-4S] cluster site.

Belongs to the IspG family. Requires [4Fe-4S] cluster as cofactor.

The enzyme catalyses (2E)-4-hydroxy-3-methylbut-2-enyl diphosphate + oxidized [flavodoxin] + H2O + 2 H(+) = 2-C-methyl-D-erythritol 2,4-cyclic diphosphate + reduced [flavodoxin]. Its pathway is isoprenoid biosynthesis; isopentenyl diphosphate biosynthesis via DXP pathway; isopentenyl diphosphate from 1-deoxy-D-xylulose 5-phosphate: step 5/6. Functionally, converts 2C-methyl-D-erythritol 2,4-cyclodiphosphate (ME-2,4cPP) into 1-hydroxy-2-methyl-2-(E)-butenyl 4-diphosphate. The polypeptide is 4-hydroxy-3-methylbut-2-en-1-yl diphosphate synthase (flavodoxin) (Shewanella sp. (strain ANA-3)).